The sequence spans 113 residues: Flagellar hook-basal body complex protein FliE (113 aa).

The protein belongs to the FliE family.

Its subcellular location is the bacterial flagellum basal body. This chain is Flagellar hook-basal body complex protein FliE, found in Rhizobium etli (strain CIAT 652).